The chain runs to 509 residues: Maturase K (509 aa).

It belongs to the intron maturase 2 family. MatK subfamily.

It is found in the plastid. It localises to the chloroplast. Its function is as follows. Usually encoded in the trnK tRNA gene intron. Probably assists in splicing its own and other chloroplast group II introns. This chain is Maturase K, found in Nicotiana glauca (Glaucous tobacco).